A 99-amino-acid polypeptide reads, in one-letter code: Large ribosomal subunit protein uL23 (99 aa).

Belongs to the universal ribosomal protein uL23 family. Part of the 50S ribosomal subunit. Contacts protein L29, and trigger factor when it is bound to the ribosome.

Functionally, one of the early assembly proteins it binds 23S rRNA. One of the proteins that surrounds the polypeptide exit tunnel on the outside of the ribosome. Forms the main docking site for trigger factor binding to the ribosome. The chain is Large ribosomal subunit protein uL23 from Alkalilimnicola ehrlichii (strain ATCC BAA-1101 / DSM 17681 / MLHE-1).